A 141-amino-acid chain; its full sequence is Large ribosomal subunit protein uL11 (141 aa).

The protein belongs to the universal ribosomal protein uL11 family. As to quaternary structure, part of the ribosomal stalk of the 50S ribosomal subunit. Interacts with L10 and the large rRNA to form the base of the stalk. L10 forms an elongated spine to which L12 dimers bind in a sequential fashion forming a multimeric L10(L12)X complex.

Functionally, forms part of the ribosomal stalk which helps the ribosome interact with GTP-bound translation factors. This chain is Large ribosomal subunit protein uL11, found in Acidianus ambivalens (Desulfurolobus ambivalens).